The chain runs to 113 residues: U11-theraphotoxin-Hhn1r (113 aa).

Positions 1 to 21 (MNTVRVTFLLVFVLAVSLGQA) are cleaved as a signal peptide. Positions 22 to 74 (DKDENRMEMQEKTEQGKSYLDFAENLLLQKLEELEAKLLEEDSEESRNSRQKR) are excised as a propeptide. The tract at residues 61–83 (EEDSEESRNSRQKRCIGEGVPCD) is disordered. 3 disulfides stabilise this stretch: Cys75-Cys90, Cys82-Cys95, and Cys89-Cys110.

The protein belongs to the neurotoxin 14 (magi-1) family. 01 (HNTX-16) subfamily. Expressed by the venom gland.

It is found in the secreted. In terms of biological role, probable ion channel inhibitor. This chain is U11-theraphotoxin-Hhn1r, found in Cyriopagopus hainanus (Chinese bird spider).